The following is a 422-amino-acid chain: Glutamyl-tRNA reductase (422 aa).

Substrate contacts are provided by residues 50–53 (TCNR), S110, 115–117 (ETQ), and Q121. C51 (nucleophile) is an active-site residue. 190 to 195 (GAGEMS) serves as a coordination point for NADP(+).

Belongs to the glutamyl-tRNA reductase family. In terms of assembly, homodimer.

It carries out the reaction (S)-4-amino-5-oxopentanoate + tRNA(Glu) + NADP(+) = L-glutamyl-tRNA(Glu) + NADPH + H(+). It functions in the pathway porphyrin-containing compound metabolism; protoporphyrin-IX biosynthesis; 5-aminolevulinate from L-glutamyl-tRNA(Glu): step 1/2. Catalyzes the NADPH-dependent reduction of glutamyl-tRNA(Glu) to glutamate 1-semialdehyde (GSA). This Campylobacter fetus subsp. fetus (strain 82-40) protein is Glutamyl-tRNA reductase.